Here is a 198-residue protein sequence, read N- to C-terminus: Superoxide dismutase [Mn], mitochondrial (198 aa).

H26 contributes to the Mn(2+) binding site. Position 34 is a 3'-nitrotyrosine (Y34). An N6-acetyllysine; alternate mark is found at K44 and K51. An N6-succinyllysine; alternate mark is found at K44 and K51. H74 is a Mn(2+) binding site. N6-acetyllysine is present on K90. An N6-acetyllysine; alternate mark is found at K98 and K106. Residues K98 and K106 each carry the N6-succinyllysine; alternate modification. Residues D159 and H163 each contribute to the Mn(2+) site. At K178 the chain carries N6-acetyllysine.

The protein belongs to the iron/manganese superoxide dismutase family. Homotetramer. Requires Mn(2+) as cofactor. Nitrated under oxidative stress. Nitration coupled with oxidation inhibits the catalytic activity. In terms of processing, acetylation at Lys-98 decreases enzymatic activity. Deacetylated by SIRT3 upon exposure to ionizing radiations or after long fasting. Post-translationally, polyubiquitinated; leading to proteasomal degradation. Deubiquitinated by USP36 which increases protein stability.

It is found in the mitochondrion matrix. It catalyses the reaction 2 superoxide + 2 H(+) = H2O2 + O2. Its function is as follows. Destroys superoxide anion radicals which are normally produced within the cells and which are toxic to biological systems. This Pan troglodytes (Chimpanzee) protein is Superoxide dismutase [Mn], mitochondrial (SOD2).